Here is a 57-residue protein sequence, read N- to C-terminus: MIKWAIIFFIISLVAGLFGFTNISAGAAGIAKVLFFIALAIFLIVLIFGVGLGMLVF.

The next 2 membrane-spanning stretches (helical) occupy residues 1 to 21 and 33 to 53; these read MIKW…FGFT and VLFF…VGLG.

The protein belongs to the UPF0391 family.

It is found in the cell membrane. In Azoarcus sp. (strain BH72), this protein is UPF0391 membrane protein azo1765.